Reading from the N-terminus, the 1125-residue chain is Tudor domain-containing protein 7 (1125 aa).

The 74-residue stretch at 3 to 76 folds into the HTH OST-type 1 domain; it reads EADLVSKMLR…SGEITCYAMA (74 aa). Residues 126 to 157 form a disordered region; that stretch reads PGFSSDFSVSKKPNPTLLRDKGNSLGVKSDAE. Residues 127-138 are compositionally biased toward polar residues; the sequence is GFSSDFSVSKKP. Positions 260 to 329 constitute an HTH OST-type 2 domain; the sequence is KMDEVQNRIK…GQDLLLYPAK (70 aa). Phosphoserine is present on Ser-346. The 70-residue stretch at 364–433 folds into the HTH OST-type 3 domain; that stretch reads MPGDFKEKVA…PQKAILYAKL (70 aa). Tudor domains follow at residues 540-597 and 730-787; these read TVHV…FCSL and LPFC…FLQE. Over residues 881–895 the composition is skewed to low complexity; the sequence is SSGTSSPNSKSGSTP. The segment at 881-904 is disordered; that stretch reads SSGTSSPNSKSGSTPVPGSTGDNF. Ser-886 bears the Phosphoserine mark. Residues 888–1125 are interaction with CDK17; it reads NSKSGSTPVP…EYLVELSKVN (238 aa). The interaction with CABLES1 stretch occupies residues 920–1125; the sequence is TSSLSVEELP…EYLVELSKVN (206 aa).

The protein belongs to the TDRD7 family. In terms of assembly, found in a mRNP complex, at least composed of TDRD1, TDRD6, TDRD7 and DDX4. Found in a complex containing CABLES1, CDK16 and CDK17. Interacts with CABLES1, CDK17 and PIWIL1.

It localises to the cytoplasm. Functionally, component of specific cytoplasmic RNA granules involved in post-transcriptional regulation of specific genes: probably acts by binding to specific mRNAs and regulating their translation. Required for lens transparency during lens development, by regulating translation of genes such as CRYBB3 and HSPB1 in the developing lens. Also required during spermatogenesis. The polypeptide is Tudor domain-containing protein 7 (TDRD7) (Canis lupus familiaris (Dog)).